Here is a 268-residue protein sequence, read N- to C-terminus: Tryptophan synthase alpha chain (268 aa).

Active-site proton acceptor residues include glutamate 49 and aspartate 60.

The protein belongs to the TrpA family. In terms of assembly, tetramer of two alpha and two beta chains.

It catalyses the reaction (1S,2R)-1-C-(indol-3-yl)glycerol 3-phosphate + L-serine = D-glyceraldehyde 3-phosphate + L-tryptophan + H2O. It functions in the pathway amino-acid biosynthesis; L-tryptophan biosynthesis; L-tryptophan from chorismate: step 5/5. The alpha subunit is responsible for the aldol cleavage of indoleglycerol phosphate to indole and glyceraldehyde 3-phosphate. The chain is Tryptophan synthase alpha chain from Escherichia fergusonii (strain ATCC 35469 / DSM 13698 / CCUG 18766 / IAM 14443 / JCM 21226 / LMG 7866 / NBRC 102419 / NCTC 12128 / CDC 0568-73).